Consider the following 119-residue polypeptide: uncharacterized protein (119 aa).

Residues Val80–Phe104 traverse the membrane as a helical segment.

The protein resides in the membrane. This is an uncharacterized protein from Saccharomyces cerevisiae (strain ATCC 204508 / S288c) (Baker's yeast).